Reading from the N-terminus, the 302-residue chain is Oxygen-dependent coproporphyrinogen-III oxidase (302 aa).

Ser94 provides a ligand contact to substrate. Residues His98 and His108 each coordinate a divalent metal cation. His108 (proton donor) is an active-site residue. 110–112 (NVR) serves as a coordination point for substrate. 2 residues coordinate a divalent metal cation: His147 and His177. Residues 242 to 277 (YVEFNLVYDRGTLFGLQTGGRTESILMSMPPLVRWQ) form an important for dimerization region. Position 260-262 (260-262 (GGR)) interacts with substrate.

Belongs to the aerobic coproporphyrinogen-III oxidase family. In terms of assembly, homodimer. The cofactor is a divalent metal cation.

Its subcellular location is the cytoplasm. The enzyme catalyses coproporphyrinogen III + O2 + 2 H(+) = protoporphyrinogen IX + 2 CO2 + 2 H2O. The protein operates within porphyrin-containing compound metabolism; protoporphyrin-IX biosynthesis; protoporphyrinogen-IX from coproporphyrinogen-III (O2 route): step 1/1. Functionally, involved in the heme biosynthesis. Catalyzes the aerobic oxidative decarboxylation of propionate groups of rings A and B of coproporphyrinogen-III to yield the vinyl groups in protoporphyrinogen-IX. In Shewanella sp. (strain MR-4), this protein is Oxygen-dependent coproporphyrinogen-III oxidase.